A 74-amino-acid chain; its full sequence is MKSSHAYLVCILLLSLFSLHQCVRLERSNKIDMSVCVHEICGGVFDGGCYCCPKTPALCWADIQFCTTYCQSQT.

The signal sequence occupies residues 1–22 (MKSSHAYLVCILLLSLFSLHQC). Disulfide bonds link C36–C51, C41–C70, C49–C66, and C52–C59.

This sequence belongs to the MEG family. In terms of tissue distribution, expressed in flowers.

This chain is EMBRYO SURROUNDING FACTOR 1-like protein 4 (ESFL4), found in Arabidopsis thaliana (Mouse-ear cress).